Here is a 473-residue protein sequence, read N- to C-terminus: Mitochondrial adenyl nucleotide antiporter SLC25A24-B (473 aa).

Residues Met-1–Asp-173 are regulatory N-terminal domain. The Mitochondrial intermembrane portion of the chain corresponds to Met-1–Gln-197. 4 consecutive EF-hand domains span residues Asp-19–Glu-54, Val-55–Glu-88, Glu-86–Lys-121, and Ile-122–Asp-157. Residues Asp-32, Asn-34, Asp-36, Lys-38, Glu-43, Asp-68, Asn-70, Asp-72, His-74, Glu-79, Asp-99, Asn-101, Asp-103, Lys-105, Glu-110, Asp-135, Asp-137, Thr-139, Thr-141, and Glu-146 each coordinate Ca(2+). Positions Ile-159–His-168 are linker region. The tract at residues Ile-174–Ile-473 is C-terminal transmembrane transporter domain. Solcar repeat units lie at residues Gly-192–Leu-277, Leu-285–Tyr-370, and Pro-382–Gln-470. The helical transmembrane segment at Leu-198–Leu-215 threads the bilayer. Topologically, residues Asp-216 to Arg-251 are mitochondrial matrix. A helical membrane pass occupies residues Gly-252 to Tyr-271. Residues Glu-272 to Gly-294 lie on the Mitochondrial intermembrane side of the membrane. Residues Ser-295 to Met-308 traverse the membrane as a helical segment. Over Glu-309–Lys-344 the chain is Mitochondrial matrix. The chain crosses the membrane as a helical span at residues Gly-345–Tyr-364. Residues Glu-365 to Leu-387 lie on the Mitochondrial intermembrane side of the membrane. A helical membrane pass occupies residues Leu-388–Leu-405. The Mitochondrial matrix segment spans residues Ala-406–Arg-444. The helical transmembrane segment at Gly-445–Tyr-464 threads the bilayer. The Mitochondrial intermembrane portion of the chain corresponds to Glu-465–Ile-473.

It belongs to the mitochondrial carrier (TC 2.A.29) family. As to quaternary structure, monomer.

Its subcellular location is the mitochondrion inner membrane. It catalyses the reaction Mg(2+)(out) + phosphate(in) + ATP(out) = Mg(2+)(in) + phosphate(out) + ATP(in). The enzyme catalyses ADP(out) + phosphate(in) + H(+)(out) = ADP(in) + phosphate(out) + H(+)(in). The catalysed reaction is AMP(out) + phosphate(in) = AMP(in) + phosphate(out). It carries out the reaction phosphate(in) + ATP(out) + 2 H(+)(out) = phosphate(out) + ATP(in) + 2 H(+)(in). It catalyses the reaction dADP(in) + ADP(out) = dADP(out) + ADP(in). The enzyme catalyses Mg(2+)(in) + ADP(out) + ATP(in) + H(+)(out) = Mg(2+)(out) + ADP(in) + ATP(out) + H(+)(in). The catalysed reaction is ADP(out) + diphosphate(in) = ADP(in) + diphosphate(out). It carries out the reaction dAMP(in) + ADP(out) + H(+)(out) = dAMP(out) + ADP(in) + H(+)(in). It catalyses the reaction 3'-AMP(in) + ADP(out) + H(+)(out) = 3'-AMP(out) + ADP(in) + H(+)(in). The enzyme catalyses dAMP(out) + phosphate(in) = dAMP(in) + phosphate(out). The catalysed reaction is 3'-AMP(out) + phosphate(in) = 3'-AMP(in) + phosphate(out). It carries out the reaction dADP(out) + phosphate(in) + H(+)(out) = dADP(in) + phosphate(out) + H(+)(in). Its activity is regulated as follows. Activated by an increase in cytosolic calcium levels that induce a conformational change of the N-terminal regulatory domain, uncapping the channel and allowing transport. Inhibited by bathophenanthroline, mersalyl, p-hydroxymercuribenzoate, bromcresol purple and tannic acid. Functionally, electroneutral antiporter that mediates the transport of adenyl nucleotides through the inner mitochondrial membrane. Originally identified as an ATP-magnesium/inorganic phosphate antiporter, it also acts as a broad specificity adenyl nucleotide antiporter. By regulating the mitochondrial matrix adenyl nucleotide pool could adapt to changing cellular energetic demands and indirectly regulate adenyl nucleotide-dependent metabolic pathways. In Xenopus laevis (African clawed frog), this protein is Mitochondrial adenyl nucleotide antiporter SLC25A24-B (slc25a24-b).